We begin with the raw amino-acid sequence, 527 residues long: Glucose-6-phosphate isomerase (527 aa).

Glu-323 acts as the Proton donor in catalysis. Active-site residues include His-352 and Lys-454.

The protein belongs to the GPI family.

It localises to the cytoplasm. The catalysed reaction is alpha-D-glucose 6-phosphate = beta-D-fructose 6-phosphate. It functions in the pathway carbohydrate biosynthesis; gluconeogenesis. Its pathway is carbohydrate degradation; glycolysis; D-glyceraldehyde 3-phosphate and glycerone phosphate from D-glucose: step 2/4. Its function is as follows. Catalyzes the reversible isomerization of glucose-6-phosphate to fructose-6-phosphate. The protein is Glucose-6-phosphate isomerase of Prochlorococcus marinus (strain MIT 9515).